The sequence spans 387 residues: F-box only protein 4 (387 aa).

Phosphoserine is present on residues S11, S12, and S48. Residues 56–102 (ASSLTRLPIDVQLYILSFLSPHDLCQLGSTSRYWNETVRDPILWRYF) form the F-box domain.

In terms of assembly, homodimer. Part of the SCF (SKP1-CUL1-F-box) E3 ubiquitin-protein ligase complex SCF(FBXO4) formed of CUL1, SKP1, RBX1 and FBXO4. Interacts with TERF1; this interaction is prevented in the presence of GNL3L. Identified in a complex with CRYAB and CCND1. Phosphorylation at Ser-11 varies during the cell cycle. It is low in resting cells and high in the S phase and the G2/M phase of the cell cycle. Phosphorylation is decreased during late G1 phase. Phosphorylation at Ser-11 promotes homodimerization and is necessary for optimal ubiquitin ligase activity towards CCND1.

It localises to the cytoplasm. The protein operates within protein modification; protein ubiquitination. In terms of biological role, substrate recognition component of a SCF (SKP1-CUL1-F-box protein) E3 ubiquitin-protein ligase complex that mediates the ubiquitination and subsequent proteasomal degradation of target proteins. Promotes ubiquitination of cyclin-D1 (CCND1) and its subsequent proteasomal degradation. However, it does not act as a major regulator of CCND1 stability during the G1/S transition. Recognizes TERF1 and promotes its ubiquitination together with UBE2D1. Promotes ubiquitination of FXR1 following phosphorylation of FXR1 by GSK3B, leading to FXR1 degradation by the proteasome. In Bos taurus (Bovine), this protein is F-box only protein 4 (FBXO4).